The primary structure comprises 711 residues: Interferon-induced GTP-binding protein Mx2 (711 aa).

2 disordered regions span residues 1–26 (MPKP…HKEM) and 62–88 (MLTL…NLYS). Positions 66 to 82 (SPQQPGGKSGQQTSKGP) are enriched in low complexity. Residues 112-383 (DLALPTIAVI…LIGHISKSLP (272 aa)) enclose the Dynamin-type G domain. Residues 122 to 129 (GDQSSGKS) form a G1 motif region. 122–129 (GDQSSGKS) serves as a coordination point for GTP. A G2 motif region spans residues 147–149 (ITR). The tract at residues 221–224 (DLPG) is G3 motif. GTP contacts are provided by residues 221–225 (DLPGI) and 290–293 (TKPD). Residues 290 to 293 (TKPD) are G4 motif. Residues 322–325 (KCRG) are G5 motif. The GED domain maps to 619–710 (ITEIGVHVNA…TLSKFAQSLQ (92 aa)).

This sequence belongs to the TRAFAC class dynamin-like GTPase superfamily. Dynamin/Fzo/YdjA family. In terms of tissue distribution, ubiquitous.

It localises to the cytoplasm. The protein resides in the nucleus. Functionally, interferon-induced dynamin-like GTPase with antiviral activity against influenza virus A (FLUAV). In Sus scrofa (Pig), this protein is Interferon-induced GTP-binding protein Mx2 (MX2).